The primary structure comprises 282 residues: MAGAGLIIIKRRIKSITNTKKITNAMGLIATSNLRKSRQNLEANKAYYEAFNDVINKIVSSSSKSNLYVAGNKSDKKLYIALTSDSGLCGGFNGAVVTAADNVMRGDKDKSLLITVGQKGISYFKRLKYETLSEYVDIPNEPGLKEAKEIADRALSLYEKGEIGEVHVIYTQFLSTVNQKVEVKKVLPIEPKKMEKVSVAEFEPDAEIILEKAIRLHIEQQLFNLLLNSKASEQASRMSSMDSATKNANDLLDALNIKYNRIRQSAITQEITEIVGGAEALK.

This sequence belongs to the ATPase gamma chain family. F-type ATPases have 2 components, CF(1) - the catalytic core - and CF(0) - the membrane proton channel. CF(1) has five subunits: alpha(3), beta(3), gamma(1), delta(1), epsilon(1). CF(0) has three main subunits: a, b and c.

Its subcellular location is the cell membrane. Functionally, produces ATP from ADP in the presence of a proton gradient across the membrane. The gamma chain is believed to be important in regulating ATPase activity and the flow of protons through the CF(0) complex. The chain is ATP synthase gamma chain from Clostridium acetobutylicum (strain ATCC 824 / DSM 792 / JCM 1419 / IAM 19013 / LMG 5710 / NBRC 13948 / NRRL B-527 / VKM B-1787 / 2291 / W).